The following is a 363-amino-acid chain: 3-dehydroquinate synthase (363 aa).

NAD(+) is bound by residues 72–77 (SGEKEK), 130–131 (TT), K142, and K151. Zn(2+)-binding residues include E184, H247, and H264.

Belongs to the sugar phosphate cyclases superfamily. Dehydroquinate synthase family. Requires Co(2+) as cofactor. Zn(2+) serves as cofactor. NAD(+) is required as a cofactor.

The protein resides in the cytoplasm. It catalyses the reaction 7-phospho-2-dehydro-3-deoxy-D-arabino-heptonate = 3-dehydroquinate + phosphate. Its pathway is metabolic intermediate biosynthesis; chorismate biosynthesis; chorismate from D-erythrose 4-phosphate and phosphoenolpyruvate: step 2/7. Catalyzes the conversion of 3-deoxy-D-arabino-heptulosonate 7-phosphate (DAHP) to dehydroquinate (DHQ). In Bacillus thuringiensis (strain Al Hakam), this protein is 3-dehydroquinate synthase.